The primary structure comprises 93 residues: Integration host factor subunit beta (93 aa).

It belongs to the bacterial histone-like protein family. As to quaternary structure, heterodimer of an alpha and a beta chain.

Its function is as follows. This protein is one of the two subunits of integration host factor, a specific DNA-binding protein that functions in genetic recombination as well as in transcriptional and translational control. In Vibrio parahaemolyticus serotype O3:K6 (strain RIMD 2210633), this protein is Integration host factor subunit beta.